The primary structure comprises 434 residues: MALEKTRGRRISVGETAVVVGAGRSGLAAARLLCREGAQVRLLDSNADAFSGREALAGELRQLGISIELGPHKPDQFENAAFVVPSPGMPVARLAGLVDEERAEILAEMELAWRYLENEPVLAVTGTSGKTTTASLAAAMLHEQGYAVFLGGNIGTPLSEYVLSGHKADVLVLEISSFQLQTCSTFCPRAGILLNITPNHLDYHKDMAEYTEAKFRLFRCQDEGDLAVLGESLRSLAARYGLKARQVYVSDAGRFSGSSLMGAHNRVNEEAAWQACRLFGVSEENAARALARFAPLPHRLERVRELEGVLFVNDSKCTTVSSLKVALEAFDRPVRLVCGGKFKGGDLAGLADLVKNRVSAVALFGAGREHFERAWQGLVPMTWHASLEPAVKHLAASACRGDVVLMAPATSSFDLYANYEERGKDFKRIVGKLS.

126–132 (GTSGKTT) serves as a coordination point for ATP.

This sequence belongs to the MurCDEF family.

It is found in the cytoplasm. The enzyme catalyses UDP-N-acetyl-alpha-D-muramoyl-L-alanine + D-glutamate + ATP = UDP-N-acetyl-alpha-D-muramoyl-L-alanyl-D-glutamate + ADP + phosphate + H(+). The protein operates within cell wall biogenesis; peptidoglycan biosynthesis. Its function is as follows. Cell wall formation. Catalyzes the addition of glutamate to the nucleotide precursor UDP-N-acetylmuramoyl-L-alanine (UMA). This is UDP-N-acetylmuramoylalanine--D-glutamate ligase from Desulfovibrio desulfuricans (strain ATCC 27774 / DSM 6949 / MB).